The chain runs to 401 residues: Probable cysteine desulfurase (401 aa).

Lys-223 carries the post-translational modification N6-(pyridoxal phosphate)lysine.

The protein belongs to the class-V pyridoxal-phosphate-dependent aminotransferase family. Csd subfamily. The cofactor is pyridoxal 5'-phosphate.

It catalyses the reaction (sulfur carrier)-H + L-cysteine = (sulfur carrier)-SH + L-alanine. Catalyzes the removal of elemental sulfur and selenium atoms from L-cysteine, L-cystine, L-selenocysteine, and L-selenocystine to produce L-alanine. This is Probable cysteine desulfurase (csd) from Pseudomonas aeruginosa (strain ATCC 15692 / DSM 22644 / CIP 104116 / JCM 14847 / LMG 12228 / 1C / PRS 101 / PAO1).